The following is a 261-amino-acid chain: MIIDQVAFRIGPLQIRWYSLSYIFGMIFAYWYIKKIDKYQVFNKESYESVISWWVISVILGGRIGYILFYNLDFYIHFPIEMLKLWNGGMSFHGALVGVMIGMYIFCRKNKIDVLAAFDLGACAVPVGIFFGRIANFINGELYGKVTDIKIGMIFPASGDLLYRHPSQLYEAFGEGFLLFIITNSLFFFTKIKTSKGMLSSVFCIWYGVIRFFIEFVREPDVQIGYIIFDQITMGQLLSIFMIIMGFYFIKLAKVQDKFSI.

4 helical membrane-spanning segments follow: residues 13-33, 50-70, 86-106, and 112-132; these read LQIR…YWYI, VISW…ILFY, WNGG…MYIF, and IDVL…IFFG. R133 serves as a coordination point for a 1,2-diacyl-sn-glycero-3-phospho-(1'-sn-glycerol). A run of 3 helical transmembrane segments spans residues 169–189, 197–217, and 232–252; these read LYEA…LFFF, GMLS…IEFV, and ITMG…FIKL.

It belongs to the Lgt family.

It localises to the cell inner membrane. It carries out the reaction L-cysteinyl-[prolipoprotein] + a 1,2-diacyl-sn-glycero-3-phospho-(1'-sn-glycerol) = an S-1,2-diacyl-sn-glyceryl-L-cysteinyl-[prolipoprotein] + sn-glycerol 1-phosphate + H(+). Its pathway is protein modification; lipoprotein biosynthesis (diacylglyceryl transfer). In terms of biological role, catalyzes the transfer of the diacylglyceryl group from phosphatidylglycerol to the sulfhydryl group of the N-terminal cysteine of a prolipoprotein, the first step in the formation of mature lipoproteins. This is Phosphatidylglycerol--prolipoprotein diacylglyceryl transferase from Ehrlichia canis (strain Jake).